The primary structure comprises 168 residues: Phosphopantetheine adenylyltransferase (168 aa).

Thr13 is a binding site for substrate. ATP contacts are provided by residues 13-14 (TF) and His21. Residues Lys45, Leu78, and Arg92 each coordinate substrate. Residues 93-95 (GLR), Glu103, and 128-134 (TQFISSS) contribute to the ATP site.

It belongs to the bacterial CoaD family. As to quaternary structure, homohexamer. Mg(2+) serves as cofactor.

It localises to the cytoplasm. It catalyses the reaction (R)-4'-phosphopantetheine + ATP + H(+) = 3'-dephospho-CoA + diphosphate. It participates in cofactor biosynthesis; coenzyme A biosynthesis; CoA from (R)-pantothenate: step 4/5. Reversibly transfers an adenylyl group from ATP to 4'-phosphopantetheine, yielding dephospho-CoA (dPCoA) and pyrophosphate. The protein is Phosphopantetheine adenylyltransferase of Wolbachia pipientis wMel.